The sequence spans 254 residues: Type III pantothenate kinase (254 aa).

6–13 (DVGNTNIV) is an ATP binding site. Residues phenylalanine 100 and 107-110 (GADR) each bind substrate. The active-site Proton acceptor is the aspartate 109. Aspartate 129 is a binding site for K(+). Threonine 132 serves as a coordination point for ATP. Threonine 184 contributes to the substrate binding site.

Belongs to the type III pantothenate kinase family. As to quaternary structure, homodimer. NH4(+) is required as a cofactor. Requires K(+) as cofactor.

Its subcellular location is the cytoplasm. The enzyme catalyses (R)-pantothenate + ATP = (R)-4'-phosphopantothenate + ADP + H(+). The protein operates within cofactor biosynthesis; coenzyme A biosynthesis; CoA from (R)-pantothenate: step 1/5. Catalyzes the phosphorylation of pantothenate (Pan), the first step in CoA biosynthesis. In Moorella thermoacetica (strain ATCC 39073 / JCM 9320), this protein is Type III pantothenate kinase.